We begin with the raw amino-acid sequence, 68 residues long: Amphipathic peptide OcyC1 (68 aa).

Positions Met1–Ala23 are cleaved as a signal peptide. Phe36 carries the phenylalanine amide modification. Residues Arg38–Arg68 constitute a propeptide that is removed on maturation.

Belongs to the non-disulfide-bridged peptide (NDBP) superfamily. Short antimicrobial peptide (group 4) family. Expressed by the venom gland.

It localises to the secreted. The protein localises to the target cell membrane. In terms of biological role, antimicrobial peptide. Inhibits the growth of Gram-positive and Gram-negative bacteria. Shows antifungal activity with MIC values ranging from 12.5 to 25 uM. Also shows an inhibitory activity on C.albicans biofilms at high concentrations. Shows low cytotoxic activity and has weak hemolytic activity. In Opisthacanthus cayaporum (South American scorpion), this protein is Amphipathic peptide OcyC1.